Reading from the N-terminus, the 434-residue chain is UDP-N-acetylglucosamine 1-carboxyvinyltransferase (434 aa).

22-23 (KN) provides a ligand contact to phosphoenolpyruvate. Residue Arg97 participates in UDP-N-acetyl-alpha-D-glucosamine binding. The Proton donor role is filled by Asp121. 2 residues coordinate UDP-N-acetyl-alpha-D-glucosamine: Asp319 and Met341.

The protein belongs to the EPSP synthase family. MurA subfamily.

It is found in the cytoplasm. It carries out the reaction phosphoenolpyruvate + UDP-N-acetyl-alpha-D-glucosamine = UDP-N-acetyl-3-O-(1-carboxyvinyl)-alpha-D-glucosamine + phosphate. It functions in the pathway cell wall biogenesis; peptidoglycan biosynthesis. Functionally, cell wall formation. Adds enolpyruvyl to UDP-N-acetylglucosamine. The sequence is that of UDP-N-acetylglucosamine 1-carboxyvinyltransferase from Porphyromonas gingivalis (strain ATCC BAA-308 / W83).